We begin with the raw amino-acid sequence, 558 residues long: 2-isopropylmalate synthase (558 aa).

The Pyruvate carboxyltransferase domain maps to 30–303; it reads PIWCSVDLRD…DPKLDCSDIE (274 aa). Mg(2+)-binding residues include aspartate 39, histidine 242, histidine 244, and asparagine 278. Positions 437–558 are regulatory domain; it reads QPGARIKFVD…ANRVLDVVGK (122 aa).

Belongs to the alpha-IPM synthase/homocitrate synthase family. LeuA type 2 subfamily. Homodimer. Mg(2+) serves as cofactor.

Its subcellular location is the cytoplasm. The catalysed reaction is 3-methyl-2-oxobutanoate + acetyl-CoA + H2O = (2S)-2-isopropylmalate + CoA + H(+). Its pathway is amino-acid biosynthesis; L-leucine biosynthesis; L-leucine from 3-methyl-2-oxobutanoate: step 1/4. Functionally, catalyzes the condensation of the acetyl group of acetyl-CoA with 3-methyl-2-oxobutanoate (2-ketoisovalerate) to form 3-carboxy-3-hydroxy-4-methylpentanoate (2-isopropylmalate). This chain is 2-isopropylmalate synthase, found in Rhizobium meliloti (strain 1021) (Ensifer meliloti).